Here is a 492-residue protein sequence, read N- to C-terminus: 3-octaprenyl-4-hydroxybenzoate carboxy-lyase (492 aa).

Asn177 is a binding site for Mn(2+). Residues 180–182 (IYR), 194–196 (RWL), and 199–200 (RG) each bind prenylated FMN. Position 243 (Glu243) interacts with Mn(2+). Residue Asp292 is the Proton donor of the active site.

Belongs to the UbiD family. In terms of assembly, homohexamer. The cofactor is prenylated FMN. Mn(2+) is required as a cofactor.

The protein resides in the cell membrane. It carries out the reaction a 4-hydroxy-3-(all-trans-polyprenyl)benzoate + H(+) = a 2-(all-trans-polyprenyl)phenol + CO2. The protein operates within cofactor biosynthesis; ubiquinone biosynthesis. Functionally, catalyzes the decarboxylation of 3-octaprenyl-4-hydroxy benzoate to 2-octaprenylphenol, an intermediate step in ubiquinone biosynthesis. This Neisseria meningitidis serogroup A / serotype 4A (strain DSM 15465 / Z2491) protein is 3-octaprenyl-4-hydroxybenzoate carboxy-lyase.